The sequence spans 670 residues: DNA ligase (670 aa).

Residues 34–38, 84–85, 116–119, R139, E174, Y226, K291, and K315 contribute to the NAD(+) site; these read DAEYD, SL, and EHKV. K118 (N6-AMP-lysine intermediate) is an active-site residue. Residues C409, C412, C425, and C430 each coordinate Zn(2+). Residues 586-670 enclose the BRCT domain; the sequence is EVSDLLSGLT…LKEKGAPVPA (85 aa).

Belongs to the NAD-dependent DNA ligase family. LigA subfamily. Requires Mg(2+) as cofactor.

The catalysed reaction is NAD(+) + (deoxyribonucleotide)n-3'-hydroxyl + 5'-phospho-(deoxyribonucleotide)m = (deoxyribonucleotide)n+m + AMP + beta-nicotinamide D-nucleotide.. DNA ligase that catalyzes the formation of phosphodiester linkages between 5'-phosphoryl and 3'-hydroxyl groups in double-stranded DNA using NAD as a coenzyme and as the energy source for the reaction. It is essential for DNA replication and repair of damaged DNA. The sequence is that of DNA ligase from Thermus filiformis.